Here is a 645-residue protein sequence, read N- to C-terminus: Ethylene response sensor 2 (645 aa).

The next 4 helical transmembrane spans lie at 5–25 (LLVQ…VTAA), 54–74 (VGDF…VYFV), 86–106 (VVCE…LAGF), and 125–145 (LTGI…PLLL). The Cu cation site is built by Cys-97 and His-101. One can recognise a GAF domain in the interval 190 to 346 (DRHTILYTTL…VVADQVAVAI (157 aa)). The Histidine kinase domain occupies 389–623 (MMSDAMRCPV…VFRFQLRRSM (235 aa)).

This sequence belongs to the ethylene receptor family. Heteromer with ETR1. Cu cation serves as cofactor. Autophosphorylated predominantly on Ser residues. As to expression, expressed in etiolated seedlings, leaves, roots and stems. Highly expressed in flowers, stamens, pollen cells, tapetum cells, carpels and ovules.

The protein localises to the endoplasmic reticulum membrane. Functionally, ethylene receptor related to bacterial two-component regulators. Acts as a redundant negative regulator of ethylene signaling. The protein is Ethylene response sensor 2 (ERS2) of Arabidopsis thaliana (Mouse-ear cress).